The sequence spans 58 residues: Large ribosomal subunit protein uL30 (58 aa).

This sequence belongs to the universal ribosomal protein uL30 family. Part of the 50S ribosomal subunit.

This is Large ribosomal subunit protein uL30 from Trichlorobacter lovleyi (strain ATCC BAA-1151 / DSM 17278 / SZ) (Geobacter lovleyi).